Consider the following 94-residue polypeptide: Putative defensin-like protein 88 (94 aa).

The N-terminal stretch at 1-26 (MATQKFSYFLLVLLMVFALILPSIIS) is a signal peptide. Disulfide bonds link Cys32/Cys72, Cys38/Cys59, and Cys48/Cys71.

Belongs to the DEFL family.

The protein localises to the secreted. The chain is Putative defensin-like protein 88 from Arabidopsis thaliana (Mouse-ear cress).